Consider the following 741-residue polypeptide: Multifunctional procollagen lysine hydroxylase and glycosyltransferase LH3 (741 aa).

The signal sequence occupies residues 1 to 27; the sequence is MAASVPEPRLLLLLLLLLPPLPPVTSA. The segment at 28–293 is required for glycosyltransferase activity; the sequence is SDRPRGANPV…FCNLNRRTLP (266 aa). 47–49 is a binding site for UDP; sequence VAT. N66 carries N-linked (GlcNAc...) asparagine glycosylation. Positions 115, 118, and 256 each coordinate Mn(2+). Residue 115-117 coordinates UDP; the sequence is DSY. 259-262 contacts UDP; it reads GPTK. Cystine bridges form between C282–C285 and C382–C388. The segment at 298-523 is accessory region; sequence PPRVLLAVFV…EFGRLLSTSH (226 aa). A glycan (N-linked (GlcNAc...) asparagine) is linked at N551. A disulfide bridge connects residues C566 and C701. 2-oxoglutarate-binding residues include R602 and Y659. Residues 650–741 form the Fe2OG dioxygenase domain; sequence RAVMNFVVRY…RYIMVSFVDP (92 aa). The Fe cation site is built by H670 and D672. The interval 675 to 718 is important for dimerization; the sequence is TFTLNVALNHKGVDYEGGGCRFLRYDCRVSSPRKGWALLHPGRL. N679 is a binding site for 2-oxoglutarate. H722 is a Fe cation binding site. R732 serves as a coordination point for 2-oxoglutarate.

Homodimer. Fe(2+) is required as a cofactor. It depends on L-ascorbate as a cofactor. Requires Mn(2+) as cofactor. In terms of tissue distribution, detected in heart and bone.

The protein resides in the rough endoplasmic reticulum. The protein localises to the endoplasmic reticulum lumen. Its subcellular location is the endoplasmic reticulum membrane. It localises to the secreted. It is found in the extracellular space. It catalyses the reaction L-lysyl-[collagen] + 2-oxoglutarate + O2 = (5R)-5-hydroxy-L-lysyl-[collagen] + succinate + CO2. It carries out the reaction (5R)-5-hydroxy-L-lysyl-[collagen] + UDP-alpha-D-galactose = (5R)-5-O-(beta-D-galactosyl)-5-hydroxy-L-lysyl-[collagen] + UDP + H(+). The catalysed reaction is (5R)-5-O-(beta-D-galactosyl)-5-hydroxy-L-lysyl-[collagen] + UDP-alpha-D-glucose = (5R)-5-O-[alpha-D-glucosyl-(1-&gt;2)-beta-D-galactosyl]-5-hydroxy-L-lysyl-[collagen] + UDP + H(+). In terms of biological role, multifunctional enzyme that catalyzes a series of post-translational modifications on Lys residues in procollagen. Plays a redundant role in catalyzing the formation of hydroxylysine residues in -Xaa-Lys-Gly- sequences in collagens. Plays a redundant role in catalyzing the transfer of galactose onto hydroxylysine groups, giving rise to galactosyl 5-hydroxylysine. Has an essential role by catalyzing the subsequent transfer of glucose moieties, giving rise to 1,2-glucosylgalactosyl-5-hydroxylysine residues. Catalyzes hydroxylation and glycosylation of Lys residues in the MBL1 collagen-like domain, giving rise to hydroxylysine and 1,2-glucosylgalactosyl-5-hydroxylysine residues. Catalyzes hydroxylation and glycosylation of Lys residues in the ADIPOQ collagen-like domain, giving rise to hydroxylysine and 1,2-glucosylgalactosyl-5-hydroxylysine residues. Essential for normal biosynthesis and secretion of type IV collagens. Essential for normal formation of basement membranes. This Rattus norvegicus (Rat) protein is Multifunctional procollagen lysine hydroxylase and glycosyltransferase LH3 (Plod3).